Here is an 81-residue protein sequence, read N- to C-terminus: Photosystem I iron-sulfur center (81 aa).

4Fe-4S ferredoxin-type domains lie at 2 to 31 (SHSVKIYDTCIGCTQCVRACPTDVLEMIPW) and 39 to 68 (IASAPRTEDCVGCKRCESACPTDFLSVRVY). Residues Cys-11, Cys-14, Cys-17, Cys-21, Cys-48, Cys-51, Cys-54, and Cys-58 each contribute to the [4Fe-4S] cluster site.

As to quaternary structure, the eukaryotic PSI reaction center is composed of at least 11 subunits. The cofactor is [4Fe-4S] cluster.

The protein localises to the plastid. It localises to the chloroplast thylakoid membrane. It carries out the reaction reduced [plastocyanin] + hnu + oxidized [2Fe-2S]-[ferredoxin] = oxidized [plastocyanin] + reduced [2Fe-2S]-[ferredoxin]. Functionally, apoprotein for the two 4Fe-4S centers FA and FB of photosystem I (PSI); essential for photochemical activity. FB is the terminal electron acceptor of PSI, donating electrons to ferredoxin. The C-terminus interacts with PsaA/B/D and helps assemble the protein into the PSI complex. Required for binding of PsaD and PsaE to PSI. PSI is a plastocyanin-ferredoxin oxidoreductase, converting photonic excitation into a charge separation, which transfers an electron from the donor P700 chlorophyll pair to the spectroscopically characterized acceptors A0, A1, FX, FA and FB in turn. This chain is Photosystem I iron-sulfur center, found in Helianthus annuus (Common sunflower).